A 342-amino-acid polypeptide reads, in one-letter code: Alternative oxidase, mitochondrial (342 aa).

The transit peptide at 1 to 20 (MIKTYQYRSILNSRNVGIRF) directs the protein to the mitochondrion. A helical membrane pass occupies residues 135-155 (LTRCIFLESVAGVPGMVAAFI). Fe cation contacts are provided by glutamate 142, glutamate 181, and histidine 184. A helical transmembrane segment spans residues 200–220 (FIIYMGQGVFANLFFLVYLIK). Glutamate 232, glutamate 287, and histidine 290 together coordinate Fe cation. Basic and acidic residues-rich tracts occupy residues 308–321 (PFAL…KEQQ) and 330–342 (PHPE…QMRL). A disordered region spans residues 308–342 (PFALKVEDVPKEQQPDEYSLKTPHPEGWNREQMRL).

This sequence belongs to the alternative oxidase family. In terms of assembly, homodimer; disulfide-linked. Fe cation is required as a cofactor.

It is found in the mitochondrion inner membrane. In terms of biological role, catalyzes cyanide-resistant oxygen consumption. May increase respiration when the cytochrome respiratory pathway is restricted, or in response to low temperatures. This is Alternative oxidase, mitochondrial (AOX1) from Wickerhamomyces anomalus (Yeast).